We begin with the raw amino-acid sequence, 243 residues long: Adenosylcobinamide-GDP ribazoletransferase (243 aa).

The next 6 membrane-spanning stretches (helical) occupy residues 33–53 (FLPVIGLLIGILMYLPTLLAP), 59–79 (IIIVSIWALYFLITGGLHIDG), 105–125 (IGAFGVLGILWLLILNLTLAY), 127–147 (TENMLLLLVPVVGRASAVFAA), 172–192 (VISIAFSLLLGSMVSIKGAII), and 223–243 (TIEISQTLFMLSAYLLKSIII).

This sequence belongs to the CobS family. Requires Mg(2+) as cofactor.

It localises to the cell membrane. It catalyses the reaction alpha-ribazole + adenosylcob(III)inamide-GDP = adenosylcob(III)alamin + GMP + H(+). It carries out the reaction alpha-ribazole 5'-phosphate + adenosylcob(III)inamide-GDP = adenosylcob(III)alamin 5'-phosphate + GMP + H(+). It functions in the pathway cofactor biosynthesis; adenosylcobalamin biosynthesis; adenosylcobalamin from cob(II)yrinate a,c-diamide: step 7/7. Its function is as follows. Joins adenosylcobinamide-GDP and alpha-ribazole to generate adenosylcobalamin (Ado-cobalamin). Also synthesizes adenosylcobalamin 5'-phosphate from adenosylcobinamide-GDP and alpha-ribazole 5'-phosphate. The protein is Adenosylcobinamide-GDP ribazoletransferase of Alkaliphilus oremlandii (strain OhILAs) (Clostridium oremlandii (strain OhILAs)).